The following is a 165-amino-acid chain: Chaperone protein SicA (165 aa).

Belongs to the LcrH/SycD chaperone family. Dimer or higher-order oligomers.

The protein localises to the cytoplasm. In terms of biological role, type III secretion-associated chaperone required for SipB and SipC stabilization. Prevents premature association of SipB with SipC, which may lead to their targeting for degradation. Along with InvF, required for transcription activation of sigDE (sopB pipC), sicAsipBCDA, and sopE. The sequence is that of Chaperone protein SicA (sicA) from Salmonella dublin.